The following is a 520-amino-acid chain: Signal peptide peptidase-like 2A (520 aa).

Residues 1–25 (MGPQRRLSPAGAALLWGFLLQLTAA) form the signal peptide. The Lumenal portion of the chain corresponds to 26–172 (QEAILHASGN…PSWPNFDYTM (147 aa)). N-linked (GlcNAc...) asparagine glycans are attached at residues Asn-58, Asn-66, Asn-74, Asn-116, Asn-126, and Asn-149. The PA domain occupies 63–151 (SLMNLTSTPL…YKDFRDMNQT (89 aa)). N-linked (GlcNAc...) (complex) asparagine glycosylation occurs at Asn-155. A helical transmembrane segment spans residues 173–193 (VVIFVIAVFTVALGGYWSGLV). The Cytoplasmic segment spans residues 194–220 (ELENLKAVTTEDREMRKKKEEYLTFSP). Residues 221–241 (LTVVIFVVICCVMMVLLYFFY) form a helical membrane-spanning segment. Topologically, residues 242-247 (KWLVYV) are lumenal. Residues 248–268 (MIAIFCIASAMSLYNCLAALI) traverse the membrane as a helical segment. The Cytoplasmic segment spans residues 269-285 (HKIPYGQCTIACRGKNM). Residues 286 to 306 (EVRLIFLSGLCIAVAVVWAVF) form a helical membrane-spanning segment. Over 307 to 311 (RNEDR) the chain is Lumenal. The helical transmembrane segment at 312–332 (WAWILQDILGIAFCLNLIKTL) threads the bilayer. Over 333 to 340 (KLPNFKSC) the chain is Cytoplasmic. Residues 341–361 (VILLGLLLLYDVFFVFITPFI) traverse the membrane as a helical segment. The active site involves Asp-351. Residues 362–399 (TKNGESIMVELAAGPFGNNEKLPVVIRVPKLIYFSVMS) are Lumenal-facing. Residues 400-420 (VCLMPVSILGFGDIIVPGLLI) form a helical membrane-spanning segment. Asp-412 is a catalytic residue. Residues 421–437 (AYCRRFDVQTGSSYIYY) are Cytoplasmic-facing. Residues 438-458 (VSSTVAYAIGMILTFVVLVLM) form a helical membrane-spanning segment. The Lumenal segment spans residues 459-460 (KK). The chain crosses the membrane as a helical span at residues 461-481 (GQPALLYLVPCTLITASVVAW). A PAL motif is present at residues 463–465 (PAL). Topologically, residues 482–520 (RRKEMKKFWKGNSYQMMDHLDCATNEENPVISGEQIVQQ) are cytoplasmic. The YXXo lysosomal targeting motif signature appears at 495-498 (YQMM).

The protein belongs to the peptidase A22B family. Interacts with ITM2B. Glycosylated. As to expression, ubiquitous.

It localises to the late endosome membrane. The protein localises to the lysosome membrane. The protein resides in the membrane. Functionally, intramembrane-cleaving aspartic protease (I-CLiP) that cleaves type II membrane signal peptides in the hydrophobic plane of the membrane. Functions in FASLG, ITM2B and TNF processing. Catalyzes the intramembrane cleavage of the anchored fragment of shed TNF-alpha (TNF), which promotes the release of the intracellular domain (ICD) for signaling to the nucleus. Also responsible for the intramembrane cleavage of Fas antigen ligand FASLG, which promotes the release of the intracellular FasL domain (FasL ICD). Essential for degradation of the invariant chain CD74 that plays a central role in the function of antigen-presenting cells in the immune system. Plays a role in the regulation of innate and adaptive immunity. Catalyzes the intramembrane cleavage of the simian foamy virus envelope glycoprotein gp130 independently of prior ectodomain shedding by furin or furin-like proprotein convertase (PC)-mediated cleavage proteolysis. The protein is Signal peptide peptidase-like 2A of Homo sapiens (Human).